Reading from the N-terminus, the 130-residue chain is Small ribosomal subunit protein uS11 (130 aa).

The protein belongs to the universal ribosomal protein uS11 family. In terms of assembly, part of the 30S ribosomal subunit. Interacts with proteins S7 and S18. Binds to IF-3.

Functionally, located on the platform of the 30S subunit, it bridges several disparate RNA helices of the 16S rRNA. Forms part of the Shine-Dalgarno cleft in the 70S ribosome. The chain is Small ribosomal subunit protein uS11 from Xylella fastidiosa (strain M12).